The following is a 491-amino-acid chain: MLLLWFGFFSFVCGLVIYRLQFHPLSKFPGPKLAALTSLYEFYYNVVLGGRYLWEIERMHEQYGPIVRITPHELHVADPNFYTEIYAGPTRRRDKDPRLVRLAGQPTSMFATVDHGLHSSRRAILNNYFSKRSIAGLEDMIQGKVQKLVKRLNIACDQGTVVQLDAASSALTADIISEYAHGVSLDYLDDVNFNNEVADSILSLASVVHVLKFFPFLLDLSKFIPDKVLENLWSHAANILRLQKLVRAQADVALQNGGKVNGQATMFGALCDPSLPAQERTLDRLQDEGFSLIGGGTETTTGTLKVIMFHLLNEKALLRKLRKELEESPSGTWAELEKLPYMRGVMNEGLRLSGVITRLPRRAPDEALRYKQWTIPPNSLMSTSSHFVHTNSDLFPDPLVFDPERWIRAEAAGQRLEHMIVTFSKGSRQCMGNHLALAELYLVISTLVREFDMDLYGVTADNIVTHREYGFGVPKERGGGLRVSISRVRTP.

The helical transmembrane segment at 2 to 22 (LLLWFGFFSFVCGLVIYRLQF) threads the bilayer. C430 contacts heme.

The protein belongs to the cytochrome P450 family. It depends on heme as a cofactor.

It is found in the membrane. Its pathway is secondary metabolite biosynthesis; terpenoid biosynthesis. In terms of biological role, cytochrome P450 monooxygenase; part of the gene cluster that mediates the biosynthesis of conidiogenone, a diterpene known to induce the conidiation. The bifunctional terpene synthase PrDS converts isopentenyl diphosphate (IPP) and dimethylallyl diphosphate (DMAPP) into deoxyconidiogenol. The C-terminal prenyltransferase (PT) domain of PrDS catalyzes formation of GGPP, whereas the N-terminal terpene cyclase (TC) domain catalyzes the cyclization of GGPP into deoxyconidiogenol. The cytochrome P450 monooxygenase PrP450 then catalyzes two rounds of oxidation to furnish conidiogenone. This chain is Conidiogenone synthase PchP450, found in Penicillium rubens (strain ATCC 28089 / DSM 1075 / NRRL 1951 / Wisconsin 54-1255) (Penicillium chrysogenum).